Here is a 95-residue protein sequence, read N- to C-terminus: Small ubiquitin-related modifier 4 (95 aa).

The 79-residue stretch at 17 to 95 (HINLKVAGQD…VFQQPTGGVY (79 aa)) folds into the Ubiquitin-like domain. Residue glycine 93 forms a Glycyl lysine isopeptide (Gly-Lys) (interchain with K-? in acceptor proteins) linkage. Positions 94-95 (VY) are excised as a propeptide.

Belongs to the ubiquitin family. SUMO subfamily. As to quaternary structure, interacts with SAE2. Covalently attached to a number of proteins. In contrast to SUMO1, SUMO2 and SUMO3, seems to be insensitive to sentrin-specific proteases due to the presence of Pro-90. This may impair processing to mature form and conjugation to substrates. As to expression, expressed mainly in adult and embryonic kidney. Expressed at various levels in immune tissues, with the highest expression in the lymph node and spleen.

Functionally, ubiquitin-like protein which can be covalently attached to target lysines as a monomer. Does not seem to be involved in protein degradation and may modulate protein subcellular localization, stability or activity. Upon oxidative stress, conjugates to various anti-oxidant enzymes, chaperones, and stress defense proteins. May also conjugate to NFKBIA, TFAP2A and FOS, negatively regulating their transcriptional activity, and to NR3C1, positively regulating its transcriptional activity. Covalent attachment to its substrates requires prior activation by the E1 complex SAE1-SAE2 and linkage to the E2 enzyme UBE2I. The chain is Small ubiquitin-related modifier 4 (SUMO4) from Homo sapiens (Human).